A 200-amino-acid polypeptide reads, in one-letter code: Pyridoxal 5'-phosphate synthase subunit PdxT (200 aa).

L-glutamine is bound at residue 52–54; that stretch reads GES. The active-site Nucleophile is the cysteine 84. L-glutamine-binding positions include arginine 116 and 145-146; that span reads IR. Catalysis depends on charge relay system residues histidine 181 and glutamate 183.

Belongs to the glutaminase PdxT/SNO family. In terms of assembly, in the presence of PdxS, forms a dodecamer of heterodimers. Only shows activity in the heterodimer.

It carries out the reaction aldehydo-D-ribose 5-phosphate + D-glyceraldehyde 3-phosphate + L-glutamine = pyridoxal 5'-phosphate + L-glutamate + phosphate + 3 H2O + H(+). It catalyses the reaction L-glutamine + H2O = L-glutamate + NH4(+). It functions in the pathway cofactor biosynthesis; pyridoxal 5'-phosphate biosynthesis. Catalyzes the hydrolysis of glutamine to glutamate and ammonia as part of the biosynthesis of pyridoxal 5'-phosphate. The resulting ammonia molecule is channeled to the active site of PdxS. This chain is Pyridoxal 5'-phosphate synthase subunit PdxT, found in Saccharolobus islandicus (strain Y.G.57.14 / Yellowstone #1) (Sulfolobus islandicus).